Reading from the N-terminus, the 527-residue chain is Peptide chain release factor 3 (527 aa).

The tr-type G domain occupies 9–277 (AKRRTFAIIS…AVVDWAPRPL (269 aa)). GTP contacts are provided by residues 18 to 25 (SHPDAGKT), 86 to 90 (DTPGH), and 140 to 143 (NKLD).

The protein belongs to the TRAFAC class translation factor GTPase superfamily. Classic translation factor GTPase family. PrfC subfamily.

It localises to the cytoplasm. In terms of biological role, increases the formation of ribosomal termination complexes and stimulates activities of RF-1 and RF-2. It binds guanine nucleotides and has strong preference for UGA stop codons. It may interact directly with the ribosome. The stimulation of RF-1 and RF-2 is significantly reduced by GTP and GDP, but not by GMP. This is Peptide chain release factor 3 from Pseudomonas entomophila (strain L48).